A 407-amino-acid chain; its full sequence is MIKVASITKVEDGSIVTPKGFSAIGTAIGLKKGKKDLGAIVCDVPASCAAVYTTNQIQAAPLQVTKDSITTEGKLQAIIVNSGNANACTGMKGLQDAYEMRALGAEHFGLKEKYVAVASTGVIGVPLPMDIIRKGIVTLIPAKEENGAHSFSEAILTTDLITKETCYEMIIDGKKVMIAGVAKGSGMIHPNMATMLSFITTDARIEHDVLQTALSQITNHTFNQITVDGDTSTNDMVIAMASGLSETKPIDMEHADWETFVFALQKVCEDLAKKIAQDGEGATKLIEVNVLGVQTNEEAKKIAKQIVGSSLVKTAIHGEDPNWGRIISSIGQSEVAINPNTIDITLQSISVLKNSEPQTFSEEEMKERLQEDEIVINVYLHLGKETGSAWGCDLSYEYVKINACYRT.

Substrate contacts are provided by T157, K183, T194, E280, N402, and T407. Catalysis depends on T194, which acts as the Nucleophile.

This sequence belongs to the ArgJ family. In terms of assembly, heterotetramer of two alpha and two beta chains.

The protein resides in the cytoplasm. It catalyses the reaction N(2)-acetyl-L-ornithine + L-glutamate = N-acetyl-L-glutamate + L-ornithine. The enzyme catalyses L-glutamate + acetyl-CoA = N-acetyl-L-glutamate + CoA + H(+). Its pathway is amino-acid biosynthesis; L-arginine biosynthesis; L-ornithine and N-acetyl-L-glutamate from L-glutamate and N(2)-acetyl-L-ornithine (cyclic): step 1/1. It functions in the pathway amino-acid biosynthesis; L-arginine biosynthesis; N(2)-acetyl-L-ornithine from L-glutamate: step 1/4. Catalyzes two activities which are involved in the cyclic version of arginine biosynthesis: the synthesis of N-acetylglutamate from glutamate and acetyl-CoA as the acetyl donor, and of ornithine by transacetylation between N(2)-acetylornithine and glutamate. This chain is Arginine biosynthesis bifunctional protein ArgJ, found in Bacillus anthracis.